The following is a 548-amino-acid chain: Malate:quinone oxidoreductase (548 aa).

The segment at 521-548 (DKPQAADSTPKPQLKPQPVQKEVADIAL) is disordered. The segment covering 530 to 541 (PKPQLKPQPVQK) has biased composition (low complexity).

This sequence belongs to the MQO family. The cofactor is FAD.

The enzyme catalyses (S)-malate + a quinone = a quinol + oxaloacetate. The protein operates within carbohydrate metabolism; tricarboxylic acid cycle; oxaloacetate from (S)-malate (quinone route): step 1/1. This chain is Malate:quinone oxidoreductase (mqo), found in Escherichia coli (strain K12).